We begin with the raw amino-acid sequence, 285 residues long: tRNA uridine(34) hydroxylase (285 aa).

Positions 130-225 (RGDDVVFFDG…YGEAFGDTGL (96 aa)) constitute a Rhodanese domain. Catalysis depends on Cys185, which acts as the Cysteine persulfide intermediate.

The protein belongs to the TrhO family.

The enzyme catalyses uridine(34) in tRNA + AH2 + O2 = 5-hydroxyuridine(34) in tRNA + A + H2O. Functionally, catalyzes oxygen-dependent 5-hydroxyuridine (ho5U) modification at position 34 in tRNAs. The polypeptide is tRNA uridine(34) hydroxylase (Rhodococcus jostii (strain RHA1)).